Reading from the N-terminus, the 121-residue chain is DNA-directed RNA polymerase subunit Rpo8 (121 aa).

Belongs to the archaeal Rpo8 RNA polymerase subunit family. As to quaternary structure, part of the 13-subunit RNA polymerase complex. This subunit is phosphorylated.

Its subcellular location is the cytoplasm. The enzyme catalyses RNA(n) + a ribonucleoside 5'-triphosphate = RNA(n+1) + diphosphate. In terms of biological role, DNA-dependent RNA polymerase (RNAP) catalyzes the transcription of DNA into RNA using the four ribonucleoside triphosphates as substrates. In Sulfolobus acidocaldarius (strain ATCC 33909 / DSM 639 / JCM 8929 / NBRC 15157 / NCIMB 11770), this protein is DNA-directed RNA polymerase subunit Rpo8.